Here is a 489-residue protein sequence, read N- to C-terminus: Hydantoin permease (489 aa).

The next 12 helical transmembrane spans lie at phenylalanine 30 to glycine 50, valine 58 to phenylalanine 78, leucine 104 to leucine 124, leucine 144 to isoleucine 164, methionine 167 to leucine 187, methionine 207 to isoleucine 227, leucine 258 to valine 278, alanine 299 to serine 321, glycine 339 to leucine 359, phenylalanine 362 to phenylalanine 382, arginine 405 to leucine 424, and leucine 428 to methionine 445. The Na(+) site is built by alanine 38 and isoleucine 41. Glutamine 121 is a binding site for substrate. Glycine 219 lines the substrate pocket. Na(+) contacts are provided by alanine 309, serine 312, and threonine 313. Residue asparagine 318 coordinates substrate. Residues proline 468–arginine 489 are disordered. Over residues alanine 479–arginine 489 the composition is skewed to polar residues.

The protein belongs to the purine-cytosine permease (2.A.39) family.

It localises to the membrane. With respect to regulation, inhibited by dinitrophenol, 5-(2-naphthylmethyl)-D-hydantoin (D-NMH), 5-(2-naphthylmethyl)-L-hydantoin (L-NMH), 5-bromovinylhydantoin (BVH) and 5-indolylmethyl-L-hydantoin (L-IMH). The affinity of benzyl-hydantoin is increased over 10-fold in the presence of 15 mM of sodium. In terms of biological role, nucleobase-proton symporter that mediates the sodium-dependent binding and uptake of 5-aryl-substituted hydantoin compounds. 5-indolyl methyl hydantoin and 5-benzyl hydantoin are the preferred substrates, with selectivity for a hydrophobic substituent in position 5 of hydantoin and for the L isomer over the D isomer. This is Hydantoin permease from Microbacterium maritypicum (Microbacterium liquefaciens).